The sequence spans 739 residues: Copalyl diphosphate synthase 1 (739 aa).

Lys-154 contacts substrate. Asp-287 and Asp-289 together coordinate Mg(2+). Positions 287-290 (DADD) match the DXDD motif motif. A substrate-binding site is contributed by Lys-373.

It belongs to the terpene synthase family. The cofactor is Mg(2+).

The catalysed reaction is (2E,6E,10E)-geranylgeranyl diphosphate = (+)-copalyl diphosphate. Its pathway is secondary metabolite biosynthesis; terpenoid biosynthesis. In terms of biological role, monofunctional diterpene synthase converting geranylgeranyl diphosphate to copalyl diphosphate. The sequence is that of Copalyl diphosphate synthase 1 (CPS1) from Selaginella moellendorffii (Spikemoss).